The following is a 121-amino-acid chain: ATP synthase epsilon chain (121 aa).

This sequence belongs to the ATPase epsilon chain family. In terms of assembly, F-type ATPases have 2 components, CF(1) - the catalytic core - and CF(0) - the membrane proton channel. CF(1) has five subunits: alpha(3), beta(3), gamma(1), delta(1), epsilon(1). CF(0) has three main subunits: a, b and c.

It is found in the cell membrane. In terms of biological role, produces ATP from ADP in the presence of a proton gradient across the membrane. The sequence is that of ATP synthase epsilon chain from Mycolicibacterium vanbaalenii (strain DSM 7251 / JCM 13017 / BCRC 16820 / KCTC 9966 / NRRL B-24157 / PYR-1) (Mycobacterium vanbaalenii).